Consider the following 344-residue polypeptide: L-rhamnose-proton symporter (344 aa).

10 helical membrane-spanning segments follow: residues 4 to 24 (AITMGIFWHLIGAASAACFYA), 38 to 58 (WSVGGIVSWLILPWTISALLL), 68 to 88 (FNLSTLLPVFLFGAMWGIGNI), 101 to 121 (MGIGIAIGITLIVGTLMTPII), 131 to 151 (TEGGHMTLLGVFVALIGVGIV), 175 to 195 (LLLAVMCGIFSAGMSFAMNAA), 214 to 234 (LPSYVVIMGGGALVNLGFCFI), 259 to 279 (ILLSALGGLMWYLQFFFYAWG), 290 to 310 (MSWMLHMSFYVLCGGLVGLVL), and 321 to 341 (VAVLSLGCVVIIIAANIVGLG).

The protein belongs to the L-rhamnose transporter (TC 2.A.7.6) family.

It is found in the cell inner membrane. It catalyses the reaction L-rhamnopyranose(in) + H(+)(in) = L-rhamnopyranose(out) + H(+)(out). In terms of biological role, uptake of L-rhamnose across the cytoplasmic membrane with the concomitant transport of protons into the cell (symport system). The protein is L-rhamnose-proton symporter of Salmonella typhi.